The primary structure comprises 94 residues: Aspartyl/glutamyl-tRNA(Asn/Gln) amidotransferase subunit C (94 aa).

This sequence belongs to the GatC family. Heterotrimer of A, B and C subunits.

The catalysed reaction is L-glutamyl-tRNA(Gln) + L-glutamine + ATP + H2O = L-glutaminyl-tRNA(Gln) + L-glutamate + ADP + phosphate + H(+). The enzyme catalyses L-aspartyl-tRNA(Asn) + L-glutamine + ATP + H2O = L-asparaginyl-tRNA(Asn) + L-glutamate + ADP + phosphate + 2 H(+). Functionally, allows the formation of correctly charged Asn-tRNA(Asn) or Gln-tRNA(Gln) through the transamidation of misacylated Asp-tRNA(Asn) or Glu-tRNA(Gln) in organisms which lack either or both of asparaginyl-tRNA or glutaminyl-tRNA synthetases. The reaction takes place in the presence of glutamine and ATP through an activated phospho-Asp-tRNA(Asn) or phospho-Glu-tRNA(Gln). This chain is Aspartyl/glutamyl-tRNA(Asn/Gln) amidotransferase subunit C, found in Campylobacter jejuni subsp. doylei (strain ATCC BAA-1458 / RM4099 / 269.97).